Consider the following 461-residue polypeptide: Zinc transporter 6 (461 aa).

The Cytoplasmic portion of the chain corresponds to 1-33; that stretch reads MGTIHLFRKPQRSFFGKLLREFRLVAADRRSWK. The helical transmembrane segment at 34-54 threads the bilayer; it reads ILLFGVINLICTGFLLMWCSS. Over 55-64 the chain is Extracellular; sequence TNSIALTAYT. Residues 65–85 form a helical membrane-spanning segment; that stretch reads YLTIFDLFSLMTCLISYWVTL. Residues 86–98 are Cytoplasmic-facing; sequence RKPSPVYSFGFER. Residues 99–119 traverse the membrane as a helical segment; the sequence is LEVLAVFASTVLAQLGALFIL. Over 120–134 the chain is Extracellular; it reads KESAERFLEQPEIHT. The helical transmembrane segment at 135 to 155 threads the bilayer; the sequence is GRLLVGTFVALCFNLFTMLSI. Over 156–200 the chain is Cytoplasmic; it reads RNKPFAYVSEAASTSWLQEHVADLSRSLCGIIPGLSSIFLPRMNP. A helical transmembrane segment spans residues 201-221; sequence FVLIDLAGAFALCITYMLIEI. Over 222 to 223 the chain is Extracellular; the sequence is NN. Residues 224 to 244 form a helical membrane-spanning segment; the sequence is YFAVDTASAIAIALMTFGTMY. Residues 245–461 are Cytoplasmic-facing; sequence PMSVYSGKVL…TNNRIGQPRP (217 aa). The disordered stretch occupies residues 371-392; the sequence is NPVTSTPAKPSSPPPEFSFNTP.

This sequence belongs to the cation diffusion facilitator (CDF) transporter (TC 2.A.4) family. SLC30A subfamily. Heterodimer with SLC30A5; form a functional zinc ion transmembrane transporter. In terms of tissue distribution, expressed in brain; especially in cerebellum, hippocampus, parahippocampal gyrus, superior and middle temporal gyrus. Also expressed in B-cells, colon, eye, and lung. Lower expression was present in bone, brain, cervix, ear, heart, kidney, muscle, nerve, pancreas, prostate, skin, stomach, and testis.

It is found in the golgi apparatus. The protein resides in the trans-Golgi network membrane. Has probably no intrinsic transporter activity but together with SLC30A5 forms a functional zinc ion:proton antiporter heterodimer, mediating zinc entry into the lumen of organelles along the secretory pathway. As part of that zinc ion:proton antiporter, contributes to zinc ion homeostasis within the early secretory pathway and regulates the activation and folding of enzymes like alkaline phosphatases and enzymes involved in phosphatidylinositol glycan anchor biosynthesis. The chain is Zinc transporter 6 from Homo sapiens (Human).